A 209-amino-acid polypeptide reads, in one-letter code: Ribosomal RNA large subunit methyltransferase E (209 aa).

S-adenosyl-L-methionine-binding residues include glycine 63, tryptophan 65, aspartate 83, aspartate 99, and aspartate 124. The active-site Proton acceptor is lysine 164.

This sequence belongs to the class I-like SAM-binding methyltransferase superfamily. RNA methyltransferase RlmE family.

Its subcellular location is the cytoplasm. The catalysed reaction is uridine(2552) in 23S rRNA + S-adenosyl-L-methionine = 2'-O-methyluridine(2552) in 23S rRNA + S-adenosyl-L-homocysteine + H(+). In terms of biological role, specifically methylates the uridine in position 2552 of 23S rRNA at the 2'-O position of the ribose in the fully assembled 50S ribosomal subunit. The chain is Ribosomal RNA large subunit methyltransferase E from Shewanella halifaxensis (strain HAW-EB4).